We begin with the raw amino-acid sequence, 190 residues long: Xanthine phosphoribosyltransferase (190 aa).

Xanthine is bound by residues Leu-20 and Asn-27. Residue 128 to 132 (ANGKA) coordinates 5-phospho-alpha-D-ribose 1-diphosphate. Lys-156 serves as a coordination point for xanthine.

Belongs to the purine/pyrimidine phosphoribosyltransferase family. Xpt subfamily. As to quaternary structure, homodimer.

It localises to the cytoplasm. It carries out the reaction XMP + diphosphate = xanthine + 5-phospho-alpha-D-ribose 1-diphosphate. The protein operates within purine metabolism; XMP biosynthesis via salvage pathway; XMP from xanthine: step 1/1. Its function is as follows. Converts the preformed base xanthine, a product of nucleic acid breakdown, to xanthosine 5'-monophosphate (XMP), so it can be reused for RNA or DNA synthesis. The sequence is that of Xanthine phosphoribosyltransferase from Pseudomonas fluorescens (strain Pf0-1).